A 186-amino-acid chain; its full sequence is Nascent polypeptide-associated complex subunit beta (186 aa).

In terms of domain architecture, NAC-A/B spans 65–130; the sequence is GADDKKLQTT…GEEKELTELV (66 aa). The tract at residues 153-186 is disordered; the sequence is QNMQKQAGAEGKKDEDEDDIPDLVEGENFESNVE. Residues 167–186 are compositionally biased toward acidic residues; that stretch reads EDEDDIPDLVEGENFESNVE.

This sequence belongs to the NAC-beta family. In terms of assembly, part of the nascent polypeptide-associated complex (NAC), consisting of egd2 and egd1. NAC associates with ribosomes via egd1.

It localises to the cytoplasm. The protein localises to the nucleus. Functionally, component of the nascent polypeptide-associated complex (NAC), a dynamic component of the ribosomal exit tunnel, protecting the emerging polypeptides from interaction with other cytoplasmic proteins to ensure appropriate nascent protein targeting. The NAC complex also promotes mitochondrial protein import by enhancing productive ribosome interactions with the outer mitochondrial membrane and blocks the inappropriate interaction of ribosomes translating non-secretory nascent polypeptides with translocation sites in the membrane of the endoplasmic reticulum. EGD1 may act as a transcription factor that exert a negative effect on the expression of several genes that are transcribed by RNA polymerase II. The chain is Nascent polypeptide-associated complex subunit beta (egd1) from Aspergillus fumigatus (strain ATCC MYA-4609 / CBS 101355 / FGSC A1100 / Af293) (Neosartorya fumigata).